A 261-amino-acid polypeptide reads, in one-letter code: Carnitinyl-CoA dehydratase (261 aa).

E111 acts as the Nucleophile in catalysis. The Proton acceptor role is filled by E131.

This sequence belongs to the enoyl-CoA hydratase/isomerase family.

It catalyses the reaction (R)-carnitinyl-CoA = crotonobetainyl-CoA + H2O. Its pathway is amine and polyamine metabolism; carnitine metabolism. Catalyzes the reversible dehydration of L-carnitinyl-CoA to crotonobetainyl-CoA. The chain is Carnitinyl-CoA dehydratase from Salmonella enteritidis PT4 (strain P125109).